A 119-amino-acid chain; its full sequence is Large ribosomal subunit protein bL20 (119 aa).

Belongs to the bacterial ribosomal protein bL20 family.

Its function is as follows. Binds directly to 23S ribosomal RNA and is necessary for the in vitro assembly process of the 50S ribosomal subunit. It is not involved in the protein synthesizing functions of that subunit. In Nitrosospira multiformis (strain ATCC 25196 / NCIMB 11849 / C 71), this protein is Large ribosomal subunit protein bL20.